The chain runs to 149 residues: 3-dehydroquinate dehydratase (149 aa).

The active-site Proton acceptor is the Tyr26. Substrate is bound by residues Asn77, His83, and Asp90. His103 functions as the Proton donor in the catalytic mechanism. Residues 104 to 105 (LS) and Arg114 each bind substrate.

The protein belongs to the type-II 3-dehydroquinase family. Homododecamer.

It catalyses the reaction 3-dehydroquinate = 3-dehydroshikimate + H2O. It functions in the pathway metabolic intermediate biosynthesis; chorismate biosynthesis; chorismate from D-erythrose 4-phosphate and phosphoenolpyruvate: step 3/7. Catalyzes a trans-dehydration via an enolate intermediate. The chain is 3-dehydroquinate dehydratase from Psychromonas ingrahamii (strain DSM 17664 / CCUG 51855 / 37).